The sequence spans 91 residues: Acylphosphatase (91 aa).

In terms of domain architecture, Acylphosphatase-like spans 5–91; the sequence is WKKWNVRGVV…QEYKDFHVEF (87 aa). Residues Arg-20 and Asn-38 contribute to the active site.

The protein belongs to the acylphosphatase family.

The catalysed reaction is an acyl phosphate + H2O = a carboxylate + phosphate + H(+). This is Acylphosphatase (acyP) from Fervidobacterium nodosum (strain ATCC 35602 / DSM 5306 / Rt17-B1).